The chain runs to 203 residues: Thymidylate kinase (203 aa).

7–14 contributes to the ATP binding site; it reads GPDGSGKS.

This sequence belongs to the thymidylate kinase family.

The catalysed reaction is dTMP + ATP = dTDP + ADP. Functionally, phosphorylation of dTMP to form dTDP in both de novo and salvage pathways of dTTP synthesis. This Finegoldia magna (strain ATCC 29328 / DSM 20472 / WAL 2508) (Peptostreptococcus magnus) protein is Thymidylate kinase.